A 1167-amino-acid chain; its full sequence is Integrin alpha-E (1167 aa).

Residues 1-19 form the signal peptide; sequence MKWLFHTLLCMASLKPQGA. At 20–1114 the chain is on the extracellular side; it reads FNLDVDWAWV…IFLKEEETRS (1095 aa). FG-GAP repeat units follow at residues 27 to 81 and 84 to 142; these read AWVT…PDEI and QPVE…LQAQ. N51 carries an N-linked (GlcNAc...) asparagine glycan. 2 disulfides stabilise this stretch: C72-C83 and C130-C164. Residues 149–192 form an X-domain (extra domain) region; sequence EGFLDPGAHVDSGDYCRSKGGSTGEEKKSARRRRTVEEEDEEED. Residues 163–191 form a disordered region; the sequence is YCRSKGGSTGEEKKSARRRRTVEEEDEEE. The region spanning 193–382 is the VWFA domain; it reads GTEIAIVLDG…SKLQQHIVHM (190 aa). Residues N256, N314, N341, N364, N418, and N437 are each glycosylated (N-linked (GlcNAc...) asparagine). One copy of the FG-GAP 3 repeat lies at 383-435; that stretch reads EGTVGDALQYQLAQTGFSAQILDKGQVLLGTVGAFNWSGGALLYSTQNGRGCF. FG-GAP repeat units lie at residues 438-491, 492-552, 555-619, and 623-683; these read QTAK…REED, AFVR…DASF, AHTL…GLYD, and QQIR…FTPD. Ca(2+) is bound by residues D514, D516, D518, D522, D578, N580, D582, D586, D646, N648, D650, and D654. C698 and C754 are disulfide-bonded. 2 N-linked (GlcNAc...) asparagine glycosylation sites follow: N718 and N773. A disulfide bond links C814 and C820. 2 N-linked (GlcNAc...) asparagine glycosylation sites follow: N829 and N846. A disulfide bond links C884 and C898. 4 N-linked (GlcNAc...) asparagine glycosylation sites follow: N911, N925, N968, and N1013. Disulfide bonds link C998-C1023 and C1031-C1047. N-linked (GlcNAc...) asparagine glycosylation is found at N1055 and N1086. The helical transmembrane segment at 1115–1137 threads the bilayer; it reads LPLIIGSSIGGLLVLVVIIAILF. Residues 1138-1167 are Cytoplasmic-facing; it reads KCGFFKRKYQQLNLESTRRAQLKADSLLQD. Residues 1140–1144 carry the GFFKR motif motif; that stretch reads GFFKR.

It belongs to the integrin alpha chain family. Heterodimer of an alpha and a beta subunit. The alpha subunit is composed of a heavy and a light chains linked by a disulfide bond. Alpha-E associates with beta-7.

The protein localises to the membrane. In terms of biological role, integrin alpha-E/beta-7 is a receptor for E-cadherin. It mediates adhesion of intra-epithelial T-lymphocytes to epithelial cell monolayers. Mice expressing a null mutation of the alpha-E subunit gene exhibit a marked reduction in the numbers of intraepithelial lymphocytes in the gut and in the development of gut-associated lymphoid aggregates, supporting a specific role for this integrin in mediating retention of lymphocytes in the intestinal wall. In Mus musculus (Mouse), this protein is Integrin alpha-E (Itgae).